Consider the following 134-residue polypeptide: uncharacterized protein (134 aa).

Residues 10 to 70 (KETRQRIIDA…AVLASRQHPL (61 aa)) enclose the HTH tetR-type domain. A DNA-binding region (H-T-H motif) is located at residues 33–52 (TLDQIARKAGVTRGAVYWHF).

In terms of biological role, unknown, does not seem to be involved in regulation of the ttgGHI or ttgVW operons. This is an uncharacterized protein from Pseudomonas putida (strain DOT-T1E).